We begin with the raw amino-acid sequence, 299 residues long: Pyridoxal 5'-phosphate synthase subunit PdxS (299 aa).

Asp24 serves as a coordination point for D-ribose 5-phosphate. Catalysis depends on Lys81, which acts as the Schiff-base intermediate with D-ribose 5-phosphate. Gly153 contributes to the D-ribose 5-phosphate binding site. Arg165 is a binding site for D-glyceraldehyde 3-phosphate. D-ribose 5-phosphate is bound by residues Gly219 and 240–241 (GS).

It belongs to the PdxS/SNZ family. As to quaternary structure, in the presence of PdxT, forms a dodecamer of heterodimers.

It catalyses the reaction aldehydo-D-ribose 5-phosphate + D-glyceraldehyde 3-phosphate + L-glutamine = pyridoxal 5'-phosphate + L-glutamate + phosphate + 3 H2O + H(+). Its pathway is cofactor biosynthesis; pyridoxal 5'-phosphate biosynthesis. Catalyzes the formation of pyridoxal 5'-phosphate from ribose 5-phosphate (RBP), glyceraldehyde 3-phosphate (G3P) and ammonia. The ammonia is provided by the PdxT subunit. Can also use ribulose 5-phosphate and dihydroxyacetone phosphate as substrates, resulting from enzyme-catalyzed isomerization of RBP and G3P, respectively. The chain is Pyridoxal 5'-phosphate synthase subunit PdxS from Methanococcus maripaludis (strain DSM 14266 / JCM 13030 / NBRC 101832 / S2 / LL).